The following is a 136-amino-acid chain: Neuropeptide CCHamide-2 (136 aa).

An N-terminal signal peptide occupies residues 1–24 (MKSTISLLLVVICTVVLAAQQSQA). An intrachain disulfide couples C28 to C35. The residue at position 39 (H39) is a Histidine amide. Positions 42–78 (RSLSPGSGSGTGVGGGMGEAASGGQEPDYVRPNGLLP) are disordered. The propeptide occupies 43–136 (SLSPGSGSGT…ANSAELNGVN (94 aa)). Over residues 48–59 (SGSGTGVGGGMG) the composition is skewed to gly residues.

In terms of tissue distribution, expressed in endocrine cells of the larval midgut (at protein level). Also expressed in endocrine cells of the midgut of adult males and females (at protein level). In the midgut, expression occurs mainly in the anterior region (at protein level). In the larval central nervous system, expressed in about 40 neurons in the brain hemispheres and ventral nerve cord (at protein level). Highly expressed in larval and adult gut with low levels in larval and adult brain. Very little expression in the larval fat body. However, another study shows high levels of expression in the larval fat body as well as the larval gut with low levels in the larval central nervous system.

Its subcellular location is the secreted. Its function is as follows. Ligand for the CCHamide-2 receptor CCHa2-R. In one study, shown to be an orexigenic peptide which induces appetite and stimulates food intake, leading to the release of insulin-like peptides which stimulate growth. In another study, shown to be a nutrient-sensitive peptide derived from peripheral tissues which controls growth by directly regulating the production and release of insulin-like peptides. The polypeptide is Neuropeptide CCHamide-2 (Drosophila melanogaster (Fruit fly)).